Reading from the N-terminus, the 319-residue chain is Malate dehydrogenase (319 aa).

NAD(+)-binding positions include 10 to 15 and D34; that span reads GSGNIG. 2 residues coordinate substrate: R83 and R89. Residues N96 and 119-121 each bind NAD(+); that span reads ITN. Substrate contacts are provided by N121 and R152. The active-site Proton acceptor is H176.

Belongs to the LDH/MDH superfamily. MDH type 3 family.

It catalyses the reaction (S)-malate + NAD(+) = oxaloacetate + NADH + H(+). Functionally, catalyzes the reversible oxidation of malate to oxaloacetate. This Paramagnetospirillum magneticum (strain ATCC 700264 / AMB-1) (Magnetospirillum magneticum) protein is Malate dehydrogenase.